We begin with the raw amino-acid sequence, 204 residues long: uncharacterized protein (204 aa).

The active-site Acyl-thioester intermediate is C52. Catalysis depends on residues H89 and D104.

The protein belongs to the arylamine N-acetyltransferase family.

This is an uncharacterized protein from Acanthamoeba polyphaga mimivirus (APMV).